A 308-amino-acid chain; its full sequence is tRNA dimethylallyltransferase (308 aa).

11-18 contacts ATP; that stretch reads GSTATGKS. Residue 13–18 coordinates substrate; sequence TATGKS. Positions 36-39 are interaction with substrate tRNA; that stretch reads DSVQ.

The protein belongs to the IPP transferase family. In terms of assembly, monomer. The cofactor is Mg(2+).

It carries out the reaction adenosine(37) in tRNA + dimethylallyl diphosphate = N(6)-dimethylallyladenosine(37) in tRNA + diphosphate. Functionally, catalyzes the transfer of a dimethylallyl group onto the adenine at position 37 in tRNAs that read codons beginning with uridine, leading to the formation of N6-(dimethylallyl)adenosine (i(6)A). In Bdellovibrio bacteriovorus (strain ATCC 15356 / DSM 50701 / NCIMB 9529 / HD100), this protein is tRNA dimethylallyltransferase.